Consider the following 359-residue polypeptide: MKSFVLLFCLAQLWGCHSIPLDPVAGYKEPACDDPDTEQAALAAVDYINKHLPRGYKHTLNQIDSVKVWPRRPTGEVYDIEIDTLETTCHVLDPTPLANCSVRQQTQHAVEGDCDIHVLKQDGQFSVLFTKCDSSPDSAEDVRKLCPDCPLLAPLNDSRVVHAVEVALATFNAESNGSYLQLVEISRAQFVPLPVSVSVEFAVAATDCIAKEVVDPTKCNLLAEKQYGFCKGSVIQKALGGEDVRVTCTLFQTQPVIPQPQPDGAEAEAPSAVPDAAGPTPSAAGPPVASVVVGPSVVAVPLPLHRAHYDLRHTFSGVASVESSSGEAFHVGKTPIVGQPSIPGGPVRLCPGRIRYFKI.

An N-terminal signal peptide occupies residues Met-1–Ser-18. The Cystatin fetuin-A-type 1 domain maps to Tyr-27–Asp-133. 6 disulfide bridges follow: Cys-32/Cys-350, Cys-89/Cys-100, Cys-114/Cys-132, Cys-146/Cys-149, Cys-208/Cys-219, and Cys-230/Cys-248. Asn-99 is a glycosylation site (N-linked (GlcNAc...) asparagine). Residues Ser-134, Ser-135, and Ser-138 each carry the phosphoserine modification. Positions Lys-144 to Val-256 constitute a Cystatin fetuin-A-type 2 domain. N-linked (GlcNAc...) asparagine glycans are attached at residues Asn-156 and Asn-176. Residues Ile-257–Gly-285 are disordered. Residue Ser-271 is glycosylated (O-linked (GalNAc...) serine). Positions Ala-276 to Gly-285 are enriched in low complexity. Residue Thr-280 is glycosylated (O-linked (GalNAc...) threonine). Ser-282 and Ser-296 each carry an O-linked (GalNAc...) serine glycan. Position 314 is a phosphothreonine (Thr-314). 4 positions are modified to phosphoserine: Ser-316, Ser-320, Ser-323, and Ser-325. Thr-334 carries O-linked (GalNAc...) threonine glycosylation. Ser-341 is a glycosylation site (O-linked (GalNAc...) serine; partial).

This sequence belongs to the fetuin family. Post-translationally, phosphorylated by FAM20C in the extracellular medium. As to expression, liver and bone.

The protein localises to the secreted. Functionally, promotes endocytosis, possesses opsonic properties and influences the mineral phase of bone. Suggested to have lymphocyte stimulating properties, lipid binding capability and to bind thyroid hormone. The chain is Alpha-2-HS-glycoprotein (AHSG) from Bos taurus (Bovine).